A 121-amino-acid polypeptide reads, in one-letter code: Ribonuclease P protein component (121 aa).

The protein belongs to the RnpA family. Consists of a catalytic RNA component (M1 or rnpB) and a protein subunit.

It catalyses the reaction Endonucleolytic cleavage of RNA, removing 5'-extranucleotides from tRNA precursor.. RNaseP catalyzes the removal of the 5'-leader sequence from pre-tRNA to produce the mature 5'-terminus. It can also cleave other RNA substrates such as 4.5S RNA. The protein component plays an auxiliary but essential role in vivo by binding to the 5'-leader sequence and broadening the substrate specificity of the ribozyme. The chain is Ribonuclease P protein component from Rickettsia prowazekii (strain Madrid E).